Consider the following 447-residue polypeptide: Cysteine--tRNA ligase (447 aa).

Cys-28 serves as a coordination point for Zn(2+). A 'HIGH' region motif is present at residues 30–40; the sequence is PTVYNYIHVGN. The Zn(2+) site is built by Cys-211, His-236, and Glu-240. The short motif at 268–272 is the 'KMSKS' region element; the sequence is KMSKS. ATP is bound at residue Lys-271.

This sequence belongs to the class-I aminoacyl-tRNA synthetase family. In terms of assembly, monomer. The cofactor is Zn(2+).

The protein resides in the cytoplasm. It carries out the reaction tRNA(Cys) + L-cysteine + ATP = L-cysteinyl-tRNA(Cys) + AMP + diphosphate. This Streptococcus pneumoniae (strain ATCC BAA-255 / R6) protein is Cysteine--tRNA ligase.